Reading from the N-terminus, the 462-residue chain is Argininosuccinate lyase (462 aa).

The protein belongs to the lyase 1 family. Argininosuccinate lyase subfamily.

The protein localises to the cytoplasm. The catalysed reaction is 2-(N(omega)-L-arginino)succinate = fumarate + L-arginine. It participates in amino-acid biosynthesis; L-arginine biosynthesis; L-arginine from L-ornithine and carbamoyl phosphate: step 3/3. The chain is Argininosuccinate lyase from Caldicellulosiruptor saccharolyticus (strain ATCC 43494 / DSM 8903 / Tp8T 6331).